The chain runs to 349 residues: Insulin gene enhancer protein isl-1 (349 aa).

LIM zinc-binding domains lie at 17–70 (CVGC…CKRD) and 79–133 (CAKC…RADH). The homeobox DNA-binding region spans 181–240 (TTRVRTVLNEKQLHTLRTCYNANPRPDALMKEQLVEMTGLSPRVIRVWFQNKRCKDKKRS). Positions 312-349 (VNFSEGGPGSNSTGSEVASMSSQLPDTPNSMVASPIEA) are disordered. Positions 321–343 (SNSTGSEVASMSSQLPDTPNSMV) are enriched in polar residues.

Its subcellular location is the nucleus. In terms of biological role, DNA-binding transcriptional activator. Recognizes and binds to the consensus octamer binding site 5'-ATAATTAA-3' in promoter of target genes. Plays a fundamental role in the gene regulatory network essential for retinal ganglion cell (RGC) differentiation. May be involved in subtype specialization of primary motoneurons. May bind to insulin gene enhancer sequences. Essential for heart development. The protein is Insulin gene enhancer protein isl-1 (isl1) of Danio rerio (Zebrafish).